A 380-amino-acid chain; its full sequence is Cytochrome b (380 aa).

Transmembrane regions (helical) follow at residues 34–54 (FGSLLALCLMTQILTGLLLAM), 78–99 (WLIRNMHANGASFFFICIYMHI), 114–134 (WNTGVLLLLTLMATAFVGYVL), and 179–199 (FFALHFLLPFMIAGLTLIHLT). The heme b site is built by H84 and H98. The heme b site is built by H183 and H197. H202 is a binding site for a ubiquinone. 4 consecutive transmembrane segments (helical) span residues 227–247 (LKDILGLALLLLPLTTMALFS), 289–309 (LGGVLALAASVLVLFLSPLLH), 321–341 (LSQLLFWTLVANLFILTWIGS), and 348–368 (FIIIGQLASTTYFTILLILFP).

This sequence belongs to the cytochrome b family. As to quaternary structure, the cytochrome bc1 complex contains 11 subunits: 3 respiratory subunits (MT-CYB, CYC1 and UQCRFS1), 2 core proteins (UQCRC1 and UQCRC2) and 6 low-molecular weight proteins (UQCRH/QCR6, UQCRB/QCR7, UQCRQ/QCR8, UQCR10/QCR9, UQCR11/QCR10 and a cleavage product of UQCRFS1). This cytochrome bc1 complex then forms a dimer. The cofactor is heme b.

The protein resides in the mitochondrion inner membrane. Functionally, component of the ubiquinol-cytochrome c reductase complex (complex III or cytochrome b-c1 complex) that is part of the mitochondrial respiratory chain. The b-c1 complex mediates electron transfer from ubiquinol to cytochrome c. Contributes to the generation of a proton gradient across the mitochondrial membrane that is then used for ATP synthesis. The sequence is that of Cytochrome b (MT-CYB) from Oceanodroma furcata (Fork-tailed storm-petrel).